The sequence spans 401 residues: Phosphoglycerate kinase (401 aa).

Substrate-binding positions include 24–26 (DFN), Arg40, 63–66 (HFGR), Arg122, and Arg155. Residues Lys206, Gly297, Glu328, and 357–360 (GGDS) contribute to the ATP site.

Belongs to the phosphoglycerate kinase family. In terms of assembly, monomer.

Its subcellular location is the cytoplasm. The enzyme catalyses (2R)-3-phosphoglycerate + ATP = (2R)-3-phospho-glyceroyl phosphate + ADP. The protein operates within carbohydrate degradation; glycolysis; pyruvate from D-glyceraldehyde 3-phosphate: step 2/5. This is Phosphoglycerate kinase from Acaryochloris marina (strain MBIC 11017).